A 146-amino-acid polypeptide reads, in one-letter code: Leghemoglobin 1 (146 aa).

In terms of domain architecture, Globin spans 2–146; that stretch reads GFTAQQDALV…LAAAIKKAMS (145 aa). S13 and S14 each carry phosphoserine; by CCAMK. Y30 is modified (nitrated tyrosine). Residues S45 and S55 each carry the phosphoserine; by CCAMK modification. S45 is a heme b binding site. An O2-binding site is contributed by H61. Positions 64, 93, and 96 each coordinate heme b. Position 123 is a phosphoserine; by CCAMK (S123). Nitrated tyrosine is present on Y134.

It belongs to the plant globin family. In terms of assembly, monomer. Post-translationally, nitrated in effective nodules and particularly in hypoxic conditions; this mechanism may play a protective role in the symbiosis by buffering toxic peroxynitrite NO(2)(-). Nitration level decrease during nodule senescence. In terms of processing, phosphorylated by CCAMK at serine residues in a Ca(2+)-dependent manner; the phosphorylation at Ser-45 disrupts the molecular environment of its porphyrin ring oxygen binding pocket, thus leading to a reduced oxygen consumption and to the delivery of oxygen O(2) to symbiosomes. Specifically and strongly expressed in root nodules and at low levels in seedlings.

The protein resides in the cytoplasm. It is found in the cytosol. Its subcellular location is the nucleus. Its function is as follows. Leghemoglobin that reversibly binds oxygen O(2) through a pentacoordinated heme iron. In root nodules, facilitates the diffusion of oxygen to the bacteroids while preventing the bacterial nitrogenase from being inactivated by buffering dioxygen, nitric oxide and carbon monoxide, and promoting the formation of reactive oxygen species (ROS, e.g. H(2)O(2)). This role is essential for symbiotic nitrogen fixation (SNF). The sequence is that of Leghemoglobin 1 from Lotus japonicus (Lotus corniculatus var. japonicus).